We begin with the raw amino-acid sequence, 194 residues long: Crossover junction endodeoxyribonuclease RuvC (194 aa).

Catalysis depends on residues D7, E68, and D141. D7, E68, and D141 together coordinate Mg(2+).

It belongs to the RuvC family. Homodimer which binds Holliday junction (HJ) DNA. The HJ becomes 2-fold symmetrical on binding to RuvC with unstacked arms; it has a different conformation from HJ DNA in complex with RuvA. In the full resolvosome a probable DNA-RuvA(4)-RuvB(12)-RuvC(2) complex forms which resolves the HJ. The cofactor is Mg(2+).

It localises to the cytoplasm. The catalysed reaction is Endonucleolytic cleavage at a junction such as a reciprocal single-stranded crossover between two homologous DNA duplexes (Holliday junction).. Its function is as follows. The RuvA-RuvB-RuvC complex processes Holliday junction (HJ) DNA during genetic recombination and DNA repair. Endonuclease that resolves HJ intermediates. Cleaves cruciform DNA by making single-stranded nicks across the HJ at symmetrical positions within the homologous arms, yielding a 5'-phosphate and a 3'-hydroxyl group; requires a central core of homology in the junction. The consensus cleavage sequence is 5'-(A/T)TT(C/G)-3'. Cleavage occurs on the 3'-side of the TT dinucleotide at the point of strand exchange. HJ branch migration catalyzed by RuvA-RuvB allows RuvC to scan DNA until it finds its consensus sequence, where it cleaves and resolves the cruciform DNA. The chain is Crossover junction endodeoxyribonuclease RuvC from Bifidobacterium longum (strain DJO10A).